The primary structure comprises 620 residues: Dihydroxy-acid dehydratase (620 aa).

A Mg(2+)-binding site is contributed by D82. C123 serves as a coordination point for [2Fe-2S] cluster. The Mg(2+) site is built by D124 and K125. Position 125 is an N6-carboxylysine (K125). C197 serves as a coordination point for [2Fe-2S] cluster. E493 serves as a coordination point for Mg(2+). Residue S519 is the Proton acceptor of the active site.

The protein belongs to the IlvD/Edd family. As to quaternary structure, homodimer. [2Fe-2S] cluster serves as cofactor. Requires Mg(2+) as cofactor.

The catalysed reaction is (2R)-2,3-dihydroxy-3-methylbutanoate = 3-methyl-2-oxobutanoate + H2O. The enzyme catalyses (2R,3R)-2,3-dihydroxy-3-methylpentanoate = (S)-3-methyl-2-oxopentanoate + H2O. It participates in amino-acid biosynthesis; L-isoleucine biosynthesis; L-isoleucine from 2-oxobutanoate: step 3/4. The protein operates within amino-acid biosynthesis; L-valine biosynthesis; L-valine from pyruvate: step 3/4. Functions in the biosynthesis of branched-chain amino acids. Catalyzes the dehydration of (2R,3R)-2,3-dihydroxy-3-methylpentanoate (2,3-dihydroxy-3-methylvalerate) into 2-oxo-3-methylpentanoate (2-oxo-3-methylvalerate) and of (2R)-2,3-dihydroxy-3-methylbutanoate (2,3-dihydroxyisovalerate) into 2-oxo-3-methylbutanoate (2-oxoisovalerate), the penultimate precursor to L-isoleucine and L-valine, respectively. The chain is Dihydroxy-acid dehydratase from Bifidobacterium longum (strain NCC 2705).